The sequence spans 774 residues: FT-interacting protein 7 (774 aa).

The span at 1–17 shows a compositional bias: basic and acidic residues; that stretch reads MMQRPFRPEEYSLKETS. Positions 1-25 are disordered; the sequence is MMQRPFRPEEYSLKETSPHLGGGAA. C2 domains are found at residues 23 to 143, 182 to 305, and 346 to 472; these read GAAG…PQWY, IPGD…SQWY, and YSSD…THAY. Ca(2+) is bound by residues D56, D62, D109, D111, and D116. 3 helical membrane-spanning segments follow: residues 575–595, 606–626, and 714–734; these read IMGV…ICHW, ILFV…FLYL, and ATAL…VTPF.

It belongs to the MCTP family. In terms of assembly, interacts with OSH1. It depends on Ca(2+) as a cofactor. Expressed in roots, stems, lemma, palea, pistils and ovules. Expressed at low levels in leaves.

The protein resides in the cell membrane. In terms of biological role, promotes nuclear translocation of the transcription factor OSH1, which directly suppresses the auxin biosynthetic gene YUCCA4 during the late development of anthers. Reduction of auxin levels at late stage of anther development, after meiosis of microspore mother cells, is necessary for normal anther dehiscence and seed setting. Required for jasmonate (JA) biosynthetic genes expression and JA production in anthers. The protein is FT-interacting protein 7 of Oryza sativa subsp. japonica (Rice).